A 542-amino-acid polypeptide reads, in one-letter code: Pre-mRNA-splicing factor 38B (542 aa).

Polar residues predominate over residues 1 to 12 (MANNSPALTGNS). Residues 1-24 (MANNSPALTGNSQPQHQAAAAVVQ) are disordered. Ala2 carries the N-acetylalanine modification. Position 5 is a phosphoserine (Ser5). The segment covering 13–24 (QPQHQAAAAVVQ) has biased composition (low complexity). Lys227 carries the post-translational modification N6-acetyllysine. A disordered region spans residues 232–542 (QIKTRPRKIK…KEHKNKDETV (311 aa)). Residues 243–255 (DGKEGVEEIDRHI) are compositionally biased toward basic and acidic residues. Over residues 256–284 (ERRRSRSPRRSLSPRRSPRRSRSRSHHRD) the composition is skewed to basic residues. A phosphoserine mark is found at Ser288, Ser290, Ser318, and Ser320. Positions 291-327 (FDRELEREKERQRLEREAKEREKERRRSRSLDRGLDR) are enriched in basic and acidic residues. Residues 292–323 (DRELEREKERQRLEREAKEREKERRRSRSLDR) adopt a coiled-coil conformation. Over residues 328–344 (RRSRSRERHRSRSRSRD) the composition is skewed to basic residues. Basic and acidic residues predominate over residues 345–418 (RKGDRRDRDR…DRRHRDDKKE (74 aa)). Residues 419 to 448 (SKKKHSRSRSRERKHRSRSRSRNAGKRSRS) show a composition bias toward basic residues. Residue Ser446 is modified to Phosphoserine. Basic and acidic residues predominate over residues 449 to 466 (RSKDKASKHKNESKEKSN). Residues Ser471, Ser473, and Ser479 each carry the phosphoserine modification. 2 stretches are compositionally biased toward basic and acidic residues: residues 479 to 492 (SVEKRKREHSPSRE) and 499 to 522 (RSQDRSHKRDHDSKDQSDRQDHQR). Ser523, Ser525, and Ser530 each carry phosphoserine. The span at 530 to 542 (SQEKEHKNKDETV) shows a compositional bias: basic and acidic residues.

Belongs to the PRP38 family.

It localises to the nucleus. In terms of biological role, may be required for pre-mRNA splicing. The protein is Pre-mRNA-splicing factor 38B (Prpf38b) of Rattus norvegicus (Rat).